The following is a 510-amino-acid chain: Hydroperoxide bicyclase CYP5164A3, mitochondrial (510 aa).

The transit peptide at 1 to 31 (MQRVGAASPTCSSLQAPAAAPPILTISPHHR) directs the protein to the mitochondrion. C452 is a binding site for heme.

This sequence belongs to the cytochrome P450 family. Heme is required as a cofactor.

The protein resides in the mitochondrion. The catalysed reaction is (13S)-hydroperoxy-(9Z,11E,15Z)-octadecatrienoate = plasmodiophorol A. It carries out the reaction (13S)-hydroperoxy-(9Z,11E,15Z)-octadecatrienoate = plasmodiophorol B. The enzyme catalyses (13S)-hydroperoxy-(9Z,11E,15Z)-octadecatrienoate = ectocarpin A + H2O. It catalyses the reaction (15S)-hydroperoxy-(5Z,8Z,11Z,13E,17Z)-eicosapentaenoate = ectocarpin B + H2O. The catalysed reaction is (15S)-hydroperoxy-(5Z,8Z,11Z,13E,17Z)-eicosapentaenoate = ectocarpin C. It carries out the reaction (15S)-hydroperoxy-(5Z,8Z,11Z,13E,17Z)-eicosapentaenoate + H2O = ectocarpin D. The enzyme catalyses (15S)-hydroperoxy-(5Z,8Z,11Z,13E,17Z)-eicosapentaenoate = 14-oxo-15-hydroxy-(5Z,8Z,11Z,17Z)-eicosatetraenoate. It participates in lipid metabolism; oxylipin biosynthesis. Cytochrome P450 hydroperoxide bicyclase involved in the metabolism of oxylipins 'ectocarpins' natural products, such as hybridalactone, ecklonilactones and derivatives. Isomerizes the hydroperoxides into epoxyalcohols via epoxyallylic radical. Can use alpha-linolenic acid 13(S)-hydroperoxide (13-HPOTE) and eicosapentaenoic acid 15(S)-hydroperoxide (15-HPEPE) as preferred substrate to produce corresponding heterobicyclic oxylipins, such as plasmodiophorol A (6-oxabicyclo[3.1.0]hexane), plasmodiophorol B (2-oxabicyclo[2.2.1]heptane) and plasmodiophorol C (4-hydroxymethyl-1,2-dihydroxycyclopentane) as well as ectocarpin A (3-propenyl-6-oxabicyclo[3.1.0]hexane) formed at about 15:3:3:1 ratio for 13-HPOTE, and analogous to plasmodiophorols A and B including ectocarpin B (3-[(1'E)-propenyl]-6-oxabicyclo[3.1.0]hexane), ectocarpin C, 14-oxo-15-hydroxy-5,8,11,17-eicosate-traenoic acid and ectocarpin D for 15-HPEPE. Barely able to use linoleic acid 13-hydroperoxide (13-HPODE), linoleic acid 9-hydroperoxide (9-HPODE), eicosapentaenoic acid 15-hydroperoxide (15-HPEPE), and alpha-linolenic acid 9-hydroperoxide (9-HPOTE) as substrates. This chain is Hydroperoxide bicyclase CYP5164A3, mitochondrial, found in Ectocarpus siliculosus (Brown alga).